Reading from the N-terminus, the 385-residue chain is Chaperone protein DnaJ (385 aa).

The J domain occupies D5–G70. The CR-type zinc finger occupies G143 to D221. 8 residues coordinate Zn(2+): C156, C159, C173, C176, C195, C198, C209, and C212. CXXCXGXG motif repeat units follow at residues C156–G163, C173–G180, C195–G202, and C209–G216.

Belongs to the DnaJ family. In terms of assembly, homodimer. Requires Zn(2+) as cofactor.

Its subcellular location is the cytoplasm. Participates actively in the response to hyperosmotic and heat shock by preventing the aggregation of stress-denatured proteins and by disaggregating proteins, also in an autonomous, DnaK-independent fashion. Unfolded proteins bind initially to DnaJ; upon interaction with the DnaJ-bound protein, DnaK hydrolyzes its bound ATP, resulting in the formation of a stable complex. GrpE releases ADP from DnaK; ATP binding to DnaK triggers the release of the substrate protein, thus completing the reaction cycle. Several rounds of ATP-dependent interactions between DnaJ, DnaK and GrpE are required for fully efficient folding. Also involved, together with DnaK and GrpE, in the DNA replication of plasmids through activation of initiation proteins. The protein is Chaperone protein DnaJ of Ruegeria sp. (strain TM1040) (Silicibacter sp.).